We begin with the raw amino-acid sequence, 258 residues long: Calcium release-activated calcium channel protein 1 (258 aa).

Residues 1–63 (MYPECGVETK…SRAKLKASSR (63 aa)) lie on the Cytoplasmic side of the membrane. Residues 64–81 (TSALLSGFAMVAMVEVQL) traverse the membrane as a helical segment. Over 82–91 (EPNHAYPPGL) the chain is Extracellular. The helical transmembrane segment at 92–112 (LIAFSACTTVLVAVHLFALMV) threads the bilayer. Residues 113 to 145 (STCILPNIEAVSNVHNLNSVKESPHERMHHHIE) lie on the Cytoplasmic side of the membrane. Residues 146–166 (LAWAFSTVIGTLLFLAEVVLL) traverse the membrane as a helical segment. Topologically, residues 167-192 (CWVKFLPVNSPKISSNETSAVSSGQA) are extracellular. The N-linked (GlcNAc...) asparagine glycan is linked to N182. The chain crosses the membrane as a helical span at residues 193–213 (AAITSTAIMVPFGLVFIVFAV). Residues 214–258 (HFYRSLVSHKTDRQFQELNELAELAQLQDQLDHRGDPVQSPVHYA) are Cytoplasmic-facing.

Belongs to the Orai family.

The protein localises to the cell membrane. Ca(2+) release-activated Ca(2+) (CRAC) channel subunit which mediates Ca(2+) influx following depletion of intracellular Ca(2+) stores. This Xenopus laevis (African clawed frog) protein is Calcium release-activated calcium channel protein 1 (orai1).